The chain runs to 60 residues: Large ribosomal subunit protein uL30 (60 aa).

This sequence belongs to the universal ribosomal protein uL30 family. In terms of assembly, part of the 50S ribosomal subunit.

The protein is Large ribosomal subunit protein uL30 of Moorella thermoacetica (strain ATCC 39073 / JCM 9320).